We begin with the raw amino-acid sequence, 744 residues long: Elongation factor G, mitochondrial (744 aa).

The transit peptide at 1–33 (MTISNLIRSRCSLAAAKSFLENVKSFSSHATFA) directs the protein to the mitochondrion. In terms of domain architecture, tr-type G spans 39-317 (EKIRNIGISA…VLDYLPHPGE (279 aa)). Residues 48-55 (AHIDSGKT), 115-119 (DTPGH), and 169-172 (NKLD) contribute to the GTP site.

This sequence belongs to the TRAFAC class translation factor GTPase superfamily. Classic translation factor GTPase family. EF-G/EF-2 subfamily.

It localises to the mitochondrion. It participates in protein biosynthesis; polypeptide chain elongation. Mitochondrial GTPase that catalyzes the GTP-dependent ribosomal translocation step during translation elongation. During this step, the ribosome changes from the pre-translocational (PRE) to the post-translocational (POST) state as the newly formed A-site-bound peptidyl-tRNA and P-site-bound deacylated tRNA move to the P and E sites, respectively. Catalyzes the coordinated movement of the two tRNA molecules, the mRNA and conformational changes in the ribosome. The polypeptide is Elongation factor G, mitochondrial (Anopheles gambiae (African malaria mosquito)).